A 29-amino-acid chain; its full sequence is Cytochrome b6-f complex subunit 8 (29 aa).

A helical transmembrane segment spans residues 3–23 (ILTLGWVGLLGLFTYSIAMVV).

It belongs to the PetN family. The 4 large subunits of the cytochrome b6-f complex are cytochrome b6, subunit IV (17 kDa polypeptide, PetD), cytochrome f and the Rieske protein, while the 4 small subunits are PetG, PetL, PetM and PetN. The complex functions as a dimer.

It is found in the cellular thylakoid membrane. In terms of biological role, component of the cytochrome b6-f complex, which mediates electron transfer between photosystem II (PSII) and photosystem I (PSI), cyclic electron flow around PSI, and state transitions. The polypeptide is Cytochrome b6-f complex subunit 8 (Cyanothece sp. (strain PCC 7425 / ATCC 29141)).